Consider the following 485-residue polypeptide: Ataxin-10 (485 aa).

This sequence belongs to the ataxin-10 family.

The protein resides in the cytoplasm. The protein localises to the perinuclear region. It is found in the midbody. May play a role in the regulation of cytokinesis. May play a role in signaling by stimulating protein glycosylation. Induces neuritogenesis by activating the Ras-MAP kinase pathway and is necessary for the survival of cerebellar neurons. Does not appear to play a major role in ciliogenesis. This Xenopus tropicalis (Western clawed frog) protein is Ataxin-10 (atxn10).